We begin with the raw amino-acid sequence, 606 residues long: MAHILGIDLGTTNSCMAVIEGGQPVVIPNAEGFRTTPSVVAFTKTGERLVGHAAKRQAITNPERTIISIKRDMGTNRRIKIDDKEYSPEEISAMILMKLKADAEAYLGEKITQAVITVPAYFTDSQRQATKNAGRIAGLEVLRIINEPTAAALAYGLDKEGHQKIMVYDLGGGTFDVSILEIGEGVIEVLATSGNNRLGGDDFDQRIIDYIADEFMKEHGIDLRKDKVALQRLKDAAERAKIELSSALQTTINLPFITADANGPKHIDMVLTRAKFEELIKDLVEKTREPVETALSDAKLTPEQIDKVILVGGSTRIPYVQEFVKKLTGKEPFKGINPDECVAIGAAIQAGVLGGQVKDILLLDVTPLSLGIETLGGVFTKIIERNTTIPTRKSQIFTTAADGQTQVEIHVLQGERPLAKDNKTLGRFILDGIPPAPRGVPQIEVTFDIDANGIVHVSAKDLGTGREQKITITSQTHLSEEEIQRAIKEAEMYAEQDRKRKELIETRNKADSIIYQTEKLLRDLGDKMTATEKEQIEAKLKALKDVMNGEDKERIERAIDELTKSFYDVSTRLYQQGYTQAGPQGGTNPGGQGGTDGNVNTDYKVY.

Threonine 174 carries the phosphothreonine; by autocatalysis modification. The tract at residues 578–606 (YTQAGPQGGTNPGGQGGTDGNVNTDYKVY) is disordered. Gly residues predominate over residues 583-596 (PQGGTNPGGQGGTD).

It belongs to the heat shock protein 70 family.

Acts as a chaperone. In Caldicellulosiruptor saccharolyticus (strain ATCC 43494 / DSM 8903 / Tp8T 6331), this protein is Chaperone protein DnaK.